Consider the following 156-residue polypeptide: Small ribosomal subunit protein uS7 (156 aa).

This sequence belongs to the universal ribosomal protein uS7 family. In terms of assembly, part of the 30S ribosomal subunit. Contacts proteins S9 and S11.

Functionally, one of the primary rRNA binding proteins, it binds directly to 16S rRNA where it nucleates assembly of the head domain of the 30S subunit. Is located at the subunit interface close to the decoding center, probably blocks exit of the E-site tRNA. The polypeptide is Small ribosomal subunit protein uS7 (Pelotomaculum thermopropionicum (strain DSM 13744 / JCM 10971 / SI)).